The primary structure comprises 161 residues: MDMGGHDMGGMSPPAAGAAAQGGMGAMKSMRYTHMTFFWGKNSEVLFTMWPGTRGGMYALALIFVFALAVIVEFLGSRRADACLAALARRAPAAGGLARAAVHTVRVGVAYLLMLALMSFNGGVFLVAVAGHAAGFLAFRAGLCGGPAQVEEDRKNDPACC.

The next 2 helical transmembrane spans lie at 55 to 75 (GGMYALALIFVFALAVIVEFL) and 109 to 129 (VAYLLMLALMSFNGGVFLVAV).

It belongs to the copper transporter (Ctr) (TC 1.A.56) family. SLC31A subfamily. In terms of assembly, self-interacts. Interacts with SWEET11 and COPT2.

It is found in the cell membrane. Functionally, involved in the transport of copper, in cooperation with SWEET11 and COPT2. Contributes to the removal of copper (Cu) from xylem, and thus to the sensitivity toward bacterial pathogens such as X.oryzae pv. oryzae (Xoo). The chain is Copper transporter 1 (COPT1) from Oryza sativa subsp. japonica (Rice).